The sequence spans 73 residues: EAGEECDCGSPENPCCDAATCKLRPGAQCADGLCCDQCRFMKKGTVCRVAKGDWNDDTCTGQSADCPRNGLYG.

The region spanning 1-73 (EAGEECDCGS…ADCPRNGLYG (73 aa)) is the Disintegrin domain. Cystine bridges form between Cys6/Cys21, Cys8/Cys16, Cys15/Cys38, Cys29/Cys35, Cys34/Cys59, and Cys47/Cys66. The short motif at 51-53 (KGD) is the Cell attachment site; atypical (KGD) element.

Belongs to the venom metalloproteinase (M12B) family. P-II subfamily. P-IIa sub-subfamily. Monomer. Expressed by the venom gland.

The protein resides in the secreted. Inhibitor of ligand binding to the integrins alpha-IIb/beta-3 (ITGA2B/ITGB3). Competition with fibrinogen for the RGD recognition sites on the alpha-IIb/beta-3 integrin results in the inhibition of platelet aggregation induced by ADP, thrombin, platelet-activating factor and collagen. In Sistrurus miliarius barbouri (Dusky pigmy rattlesnake), this protein is Disintegrin barbourin.